Reading from the N-terminus, the 429-residue chain is Tubby-like F-box protein 5 (429 aa).

The F-box domain occupies 53–108; the sequence is TRWANLPAALLRDVMKKLDESESTWPARKQVVACAGVCKTWRLMCKDIVKSPEFSG. The tract at residues 360-385 is disordered; that stretch reads QPGSGSDGGALATRPSLSPQQPEQSN. The segment covering 374–383 has biased composition (polar residues); the sequence is PSLSPQQPEQ.

It belongs to the TUB family. Mostly expressed in roots, flowers and siliques.

The sequence is that of Tubby-like F-box protein 5 from Arabidopsis thaliana (Mouse-ear cress).